Here is a 423-residue protein sequence, read N- to C-terminus: Imidazolonepropionase (423 aa).

Fe(3+)-binding residues include His78 and His80. 2 residues coordinate Zn(2+): His78 and His80. 4-imidazolone-5-propanoate-binding residues include Arg87, Tyr150, and His183. Residue Tyr150 participates in N-formimidoyl-L-glutamate binding. His247 contacts Fe(3+). His247 provides a ligand contact to Zn(2+). Position 250 (Glu250) interacts with 4-imidazolone-5-propanoate. Asp322 is a binding site for Fe(3+). Residue Asp322 coordinates Zn(2+). Positions 324 and 326 each coordinate N-formimidoyl-L-glutamate. Residue Ser327 participates in 4-imidazolone-5-propanoate binding.

The protein belongs to the metallo-dependent hydrolases superfamily. HutI family. The cofactor is Zn(2+). It depends on Fe(3+) as a cofactor.

It localises to the cytoplasm. The catalysed reaction is 4-imidazolone-5-propanoate + H2O = N-formimidoyl-L-glutamate. The protein operates within amino-acid degradation; L-histidine degradation into L-glutamate; N-formimidoyl-L-glutamate from L-histidine: step 3/3. In terms of biological role, catalyzes the hydrolytic cleavage of the carbon-nitrogen bond in imidazolone-5-propanoate to yield N-formimidoyl-L-glutamate. It is the third step in the universal histidine degradation pathway. The protein is Imidazolonepropionase of Bacillus anthracis (strain A0248).